The chain runs to 795 residues: Phenylalanine--tRNA ligase beta subunit (795 aa).

Positions 39–148 (AGSFNGVVVG…ADAPLGTDIR (110 aa)) constitute a tRNA-binding domain. In terms of domain architecture, B5 spans 401-476 (PKRATITLRR…RVYGYNNIPD (76 aa)). Mg(2+) contacts are provided by Asp-454, Asp-460, Glu-463, and Glu-464. The region spanning 701–794 (SRFPANRRDI…LKERFQASLR (94 aa)) is the FDX-ACB domain.

It belongs to the phenylalanyl-tRNA synthetase beta subunit family. Type 1 subfamily. As to quaternary structure, tetramer of two alpha and two beta subunits. Mg(2+) serves as cofactor.

Its subcellular location is the cytoplasm. The catalysed reaction is tRNA(Phe) + L-phenylalanine + ATP = L-phenylalanyl-tRNA(Phe) + AMP + diphosphate + H(+). In Salmonella choleraesuis (strain SC-B67), this protein is Phenylalanine--tRNA ligase beta subunit.